A 384-amino-acid polypeptide reads, in one-letter code: DNA replication and repair protein RecF (384 aa).

ATP is bound at residue 30 to 37; sequence GENAQGKT.

The protein belongs to the RecF family.

It is found in the cytoplasm. Functionally, the RecF protein is involved in DNA metabolism; it is required for DNA replication and normal SOS inducibility. RecF binds preferentially to single-stranded, linear DNA. It also seems to bind ATP. The chain is DNA replication and repair protein RecF from Levilactobacillus brevis (strain ATCC 367 / BCRC 12310 / CIP 105137 / JCM 1170 / LMG 11437 / NCIMB 947 / NCTC 947) (Lactobacillus brevis).